Here is a 293-residue protein sequence, read N- to C-terminus: Single-pass membrane and coiled-coil domain-containing protein 2 (293 aa).

Positions 116-188 (KNLLEFLLKD…SAKLRMYQME (73 aa)) form a coiled coil. Residues 234 to 254 (IFIMFYVLTVTGLLCYILFFG) traverse the membrane as a helical segment.

It localises to the membrane. This Macaca fascicularis (Crab-eating macaque) protein is Single-pass membrane and coiled-coil domain-containing protein 2 (SMCO2).